We begin with the raw amino-acid sequence, 289 residues long: Oxaloacetate decarboxylase (289 aa).

Residue S47 participates in substrate binding. D85 contacts Mg(2+). Substrate contacts are provided by R156 and H232.

It belongs to the isocitrate lyase/PEP mutase superfamily. Oxaloacetate decarboxylase family. Homotetramer; dimer of dimers. Mg(2+) is required as a cofactor.

It catalyses the reaction oxaloacetate + H(+) = pyruvate + CO2. Its function is as follows. Catalyzes the decarboxylation of oxaloacetate into pyruvate. Seems to play a role in maintaining cellular concentrations of bicarbonate and pyruvate. In Rhodopseudomonas palustris (strain BisA53), this protein is Oxaloacetate decarboxylase.